Here is a 757-residue protein sequence, read N- to C-terminus: MDVNPTLLFLKVPAQNAISTTFPYTGDPPYSHGTGTGYTMDTVNRTHQYSEKGKWTTNTETGAPQLNPIDGPLPENHEPSGYAQTDCVLEAMAFLEESHPGIFENSCLETMEVVQQTRVDKLTQGRQTYDWTLNRNQPAATALANTIEVFRSNDLTANESGRLIDFLKDVMESMDKEEMEITTHFQRKRRIRDNMTKKMVTQRTIGKKKQRLNKKSYLIRALTLNTMTKDAERGKLKRRAIATPGMQIRGFVYFVETLARSICEKLEQSGLPVGGNEKKAKLANVVRKMMTNSQDTELSFTITGDNTKWNENQNPRMFLAMITYITRNQPDWFRNVLSIAPIMFSNKMARLGKGYMFESKSMKLRTQIPAEMLANIDLKYFNELTKKKIEKIRPLLIDGTASLSPGMMMGMFNMLSTVLGVSILNLGQKRYTKTTYWWDGLQSSDDFALIVNAPNHEGIQAGVDRFYRTCKLVGINMSKKKSYINRTGTFEFTSFFYRYGFVANFSMELPSFGVSGINESADMSIGVTVIKNNMINNDLGPATAQMALQLFIKDYRYTYRCHRGDTQIQTRRSFELKKLWEQTRSKAGLLVSDGGPNLYNIRNLHIPEVCLKWELMDEDYQGRLCNPLNPFVSHKEIESVNNAVVMPAHGPAKSMEYDAVATTHSWIPKRNRSILNTSQRGILEDEQMYQKCCNLFEKFFPSSSYRRPVGISSMVEAMVSRARIDARIDFESGRIKKEEFAEIMKICSTIEELRRQK.

A disordered region spans residues 50–81; it reads SEKGKWTTNTETGAPQLNPIDGPLPENHEPSG. Residues 55-64 are compositionally biased toward polar residues; that stretch reads WTTNTETGAP. 2 consecutive short sequence motifs (nuclear localization signal) follow at residues 187-195 and 203-216; these read RKRRIRDNM and RTIG…NKKS. Residues 249 to 256 are promoter-binding site; the sequence is RGFVYFVE. A RdRp catalytic domain is found at 286–483; the sequence is VRKMMTNSQD…GINMSKKKSY (198 aa).

Belongs to the influenza viruses polymerase PB1 family. Influenza RNA polymerase is composed of three subunits: PB1, PB2 and PA. Interacts (via N-terminus) with PA (via C-terminus). Interacts (via C-terminus) with PB2 (via N-terminus); this interaction is essential for transcription initiation. Phosphorylated by host PRKCA.

The protein resides in the host nucleus. The protein localises to the host cytoplasm. It catalyses the reaction RNA(n) + a ribonucleoside 5'-triphosphate = RNA(n+1) + diphosphate. In terms of biological role, RNA-dependent RNA polymerase which is responsible for replication and transcription of virus RNA segments. The transcription of viral mRNAs occurs by a unique mechanism called cap-snatching. 5' methylated caps of cellular mRNAs are cleaved after 10-13 nucleotides by PA. In turn, these short capped RNAs are used as primers by PB1 for transcription of viral mRNAs. During virus replication, PB1 initiates RNA synthesis and copy vRNA into complementary RNA (cRNA) which in turn serves as a template for the production of more vRNAs. The protein is RNA-directed RNA polymerase catalytic subunit of Influenza A virus (strain A/Silky Chicken/Hong Kong/YU100/2002 H5N1 genotype X3).